The chain runs to 164 residues: Peptidyl-prolyl cis-trans isomerase CYP18-2 (164 aa).

Residues 12–162 (VTLETSMGPF…HEVKILRTKV (151 aa)) enclose the PPIase cyclophilin-type domain.

Belongs to the cyclophilin-type PPIase family. As to expression, ubiquitous.

The protein resides in the cytoplasm. It carries out the reaction [protein]-peptidylproline (omega=180) = [protein]-peptidylproline (omega=0). Functionally, PPIases accelerate the folding of proteins. It catalyzes the cis-trans isomerization of proline imidic peptide bonds in oligopeptides. This is Peptidyl-prolyl cis-trans isomerase CYP18-2 (CYP18-2) from Arabidopsis thaliana (Mouse-ear cress).